Consider the following 156-residue polypeptide: Phosphoribosyl-AMP cyclohydrolase (156 aa).

Mg(2+) is bound at residue Asp106. Cys107 serves as a coordination point for Zn(2+). 2 residues coordinate Mg(2+): Asp108 and Asp110. Zn(2+) is bound by residues Cys123 and Cys130.

This sequence belongs to the PRA-CH family. Homodimer. It depends on Mg(2+) as a cofactor. Zn(2+) serves as cofactor.

Its subcellular location is the cytoplasm. It catalyses the reaction 1-(5-phospho-beta-D-ribosyl)-5'-AMP + H2O = 1-(5-phospho-beta-D-ribosyl)-5-[(5-phospho-beta-D-ribosylamino)methylideneamino]imidazole-4-carboxamide. The protein operates within amino-acid biosynthesis; L-histidine biosynthesis; L-histidine from 5-phospho-alpha-D-ribose 1-diphosphate: step 3/9. Catalyzes the hydrolysis of the adenine ring of phosphoribosyl-AMP. The chain is Phosphoribosyl-AMP cyclohydrolase from Gluconobacter oxydans (strain 621H) (Gluconobacter suboxydans).